The primary structure comprises 336 residues: Phosphate acyltransferase (336 aa).

Belongs to the PlsX family. In terms of assembly, homodimer. Probably interacts with PlsY.

It localises to the cytoplasm. It carries out the reaction a fatty acyl-[ACP] + phosphate = an acyl phosphate + holo-[ACP]. It participates in lipid metabolism; phospholipid metabolism. Functionally, catalyzes the reversible formation of acyl-phosphate (acyl-PO(4)) from acyl-[acyl-carrier-protein] (acyl-ACP). This enzyme utilizes acyl-ACP as fatty acyl donor, but not acyl-CoA. This Dictyoglomus thermophilum (strain ATCC 35947 / DSM 3960 / H-6-12) protein is Phosphate acyltransferase.